Here is a 387-residue protein sequence, read N- to C-terminus: Succinate--CoA ligase [ADP-forming] subunit beta (387 aa).

One can recognise an ATP-grasp domain in the interval 9-236 (KELFAKHNVP…RAATDPLELK (228 aa)). ATP contacts are provided by residues lysine 45, 52–54 (GRG), serine 94, and glutamate 99. Residues asparagine 191 and aspartate 205 each coordinate Mg(2+). Residues asparagine 256 and 318-320 (GIT) each bind substrate.

This sequence belongs to the succinate/malate CoA ligase beta subunit family. Heterotetramer of two alpha and two beta subunits. It depends on Mg(2+) as a cofactor.

The catalysed reaction is succinate + ATP + CoA = succinyl-CoA + ADP + phosphate. It carries out the reaction GTP + succinate + CoA = succinyl-CoA + GDP + phosphate. It participates in carbohydrate metabolism; tricarboxylic acid cycle; succinate from succinyl-CoA (ligase route): step 1/1. Succinyl-CoA synthetase functions in the citric acid cycle (TCA), coupling the hydrolysis of succinyl-CoA to the synthesis of either ATP or GTP and thus represents the only step of substrate-level phosphorylation in the TCA. The beta subunit provides nucleotide specificity of the enzyme and binds the substrate succinate, while the binding sites for coenzyme A and phosphate are found in the alpha subunit. The sequence is that of Succinate--CoA ligase [ADP-forming] subunit beta from Mycobacterium bovis (strain ATCC BAA-935 / AF2122/97).